The following is a 160-amino-acid chain: Transcriptional repressor NrdR (160 aa).

The segment at 3-34 (CPYCQCEDTQVKDSRPAEEGAVIRRRRVCSVC) is a zinc-finger region. The 91-residue stretch at 49–139 (LLVLKKSGRR…VYRDFRNASD (91 aa)) folds into the ATP-cone domain.

Belongs to the NrdR family. Requires Zn(2+) as cofactor.

In terms of biological role, negatively regulates transcription of bacterial ribonucleotide reductase nrd genes and operons by binding to NrdR-boxes. This Bartonella bacilliformis (strain ATCC 35685 / KC583 / Herrer 020/F12,63) protein is Transcriptional repressor NrdR.